Consider the following 134-residue polypeptide: Small ribosomal subunit protein uS11 (134 aa).

The protein belongs to the universal ribosomal protein uS11 family. Part of the 30S ribosomal subunit. Interacts with proteins S7 and S18. Binds to IF-3.

Located on the platform of the 30S subunit, it bridges several disparate RNA helices of the 16S rRNA. Forms part of the Shine-Dalgarno cleft in the 70S ribosome. The sequence is that of Small ribosomal subunit protein uS11 from Corynebacterium diphtheriae (strain ATCC 700971 / NCTC 13129 / Biotype gravis).